Reading from the N-terminus, the 235-residue chain is Calcium-activated potassium channel subunit beta-2 (235 aa).

Positions 1–45 (MFIWTSGRTSSSYRQDEKRNIYQKIRDHDLLDKRKTVTALKAGED) are ball and chain. Residues 1 to 46 (MFIWTSGRTSSSYRQDEKRNIYQKIRDHDLLDKRKTVTALKAGEDR) are Cytoplasmic-facing. A helical transmembrane segment spans residues 47-67 (AILLGLAMMVCSIMMYFLLGI). Over 68-194 (TLLRSYMQSV…VILTKLYSSN (127 aa)) the chain is Extracellular. Asparagine 88, asparagine 96, and asparagine 119 each carry an N-linked (GlcNAc...) asparagine glycan. Residues 195 to 215 (VLFHSLFWPTCMMAGGVAIVA) traverse the membrane as a helical segment. Residues 216–235 (MVKLTQYLSLLCERIQRINR) are Cytoplasmic-facing.

The protein belongs to the KCNMB (TC 8.A.14.1) family. KCNMB2 subfamily. In terms of assembly, interacts with KCNMA1 tetramer. There are probably 4 molecules of KCMNB2 per KCNMA1 tetramer. N-glycosylated.

The protein resides in the membrane. Regulatory subunit of the calcium activated potassium KCNMA1 (maxiK) channel. Modulates the calcium sensitivity and gating kinetics of KCNMA1, thereby contributing to KCNMA1 channel diversity. Acts as a negative regulator that confers rapid and complete inactivation of KCNMA1 channel complex. The chain is Calcium-activated potassium channel subunit beta-2 (Kcnmb2) from Mus musculus (Mouse).